The following is a 660-amino-acid chain: Probable E3 ubiquitin ligase complex SCF subunit sconB (660 aa).

A compositionally biased stretch (basic and acidic residues) spans 1-13; it reads MHNENSVLRDAKE. Disordered regions lie at residues 1 to 34 and 86 to 108; these read MHNENSVLRDAKESLFNPTPRKQGLPEDNTMTPY and LGTGISKSAGPPPRPDLKCRRQA. Residues 175–221 form the F-box domain; that stretch reads IDFITALPPEISFKILSYLDTASLCRAAQVSRGWKCLADDDVVWHRM. 7 WD repeats span residues 340 to 379, 381 to 419, 421 to 457, 459 to 500, 542 to 586, 587 to 626, and 629 to 660; these read GHTNGVMCLQFEDNILATGSYDTTIKIWDMETGEELRTLT, HTSGIRCLQFDETKLISGSIDRTLKVWNWRTGECISTYT, HLGGIIGLHFQNSILASGSTDKTVKIWNFEDKSTFLL, GHSD…RTFQ, SQVS…CLRT, FFGHLEGVWALSADTLRIVSGAEDRMVKIWDPRTGKCERT, and GHSGPVTCVGLGDSCFVTGSEDCEVRIYSFKN. Positions 521–553 are disordered; sequence GHDASHEEDSNASVSGDESPSSQVSCSPTAAFF. Positions 531 to 548 are enriched in polar residues; the sequence is NASVSGDESPSSQVSCSP.

It belongs to the WD repeat MET30/SCONB/SCON-2 family. In terms of assembly, component of the SCF(sconB) E3 ubiquitin ligase complex.

It functions in the pathway protein modification; protein ubiquitination. In terms of biological role, component of the SCF(sconB) E3 ubiquitin ligase complex involved in the regulation of sulfur metabolite repression, probably by mediating the inactivation or degradation of the metR transcription factor. The sequence is that of Probable E3 ubiquitin ligase complex SCF subunit sconB (sconB) from Talaromyces marneffei (strain ATCC 18224 / CBS 334.59 / QM 7333) (Penicillium marneffei).